The sequence spans 338 residues: Ribonucleoside-diphosphate reductase small subunit (338 aa).

Asp81, Glu112, and His115 together coordinate Fe cation. Tyr119 is an active-site residue. Residues Glu174, Glu208, and His211 each coordinate Fe cation.

It belongs to the ribonucleoside diphosphate reductase small chain family. As to quaternary structure, heterodimer of a large and a small subunit. Requires Fe cation as cofactor.

The protein resides in the cytoplasm. The catalysed reaction is a 2'-deoxyribonucleoside 5'-diphosphate + [thioredoxin]-disulfide + H2O = a ribonucleoside 5'-diphosphate + [thioredoxin]-dithiol. In terms of biological role, provides the precursors necessary for DNA synthesis. Catalyzes the biosynthesis of deoxyribonucleotides from the corresponding ribonucleotides. This Dictyostelium discoideum (Social amoeba) protein is Ribonucleoside-diphosphate reductase small subunit (rnrB-1).